Reading from the N-terminus, the 185-residue chain is GTP cyclohydrolase 1 (185 aa).

Zn(2+)-binding residues include cysteine 75, histidine 78, and cysteine 146.

The protein belongs to the GTP cyclohydrolase I family. As to quaternary structure, toroid-shaped homodecamer, composed of two pentamers of five dimers.

The enzyme catalyses GTP + H2O = 7,8-dihydroneopterin 3'-triphosphate + formate + H(+). It participates in cofactor biosynthesis; 7,8-dihydroneopterin triphosphate biosynthesis; 7,8-dihydroneopterin triphosphate from GTP: step 1/1. In Methylococcus capsulatus (strain ATCC 33009 / NCIMB 11132 / Bath), this protein is GTP cyclohydrolase 1.